The following is a 96-amino-acid chain: Putative pterin-4-alpha-carbinolamine dehydratase (96 aa).

This sequence belongs to the pterin-4-alpha-carbinolamine dehydratase family.

The enzyme catalyses (4aS,6R)-4a-hydroxy-L-erythro-5,6,7,8-tetrahydrobiopterin = (6R)-L-erythro-6,7-dihydrobiopterin + H2O. In Brucella anthropi (strain ATCC 49188 / DSM 6882 / CCUG 24695 / JCM 21032 / LMG 3331 / NBRC 15819 / NCTC 12168 / Alc 37) (Ochrobactrum anthropi), this protein is Putative pterin-4-alpha-carbinolamine dehydratase.